Consider the following 231-residue polypeptide: MTVTIALPSKGRMKDEASAIFERAGMKIAAVGSDRSYRGRVEGWDDVEIAYLSASEIAREIGSGAVDFGVTGEDLVREGLADADARVDFAARLGFGHADVVVAVPEIWYDVDTMADLGDVAADFRARHGRRLAIATKYWRLTQQFFSGSHGIQLYRIVESLGATEGAPASGSADIIVDITSTGSTLKANHLKILSDGVILRSEACLVRARKATHEGNPVIDRIVAAVRAVL.

Belongs to the ATP phosphoribosyltransferase family. Short subfamily. Heteromultimer composed of HisG and HisZ subunits.

Its subcellular location is the cytoplasm. The catalysed reaction is 1-(5-phospho-beta-D-ribosyl)-ATP + diphosphate = 5-phospho-alpha-D-ribose 1-diphosphate + ATP. It functions in the pathway amino-acid biosynthesis; L-histidine biosynthesis; L-histidine from 5-phospho-alpha-D-ribose 1-diphosphate: step 1/9. In terms of biological role, catalyzes the condensation of ATP and 5-phosphoribose 1-diphosphate to form N'-(5'-phosphoribosyl)-ATP (PR-ATP). Has a crucial role in the pathway because the rate of histidine biosynthesis seems to be controlled primarily by regulation of HisG enzymatic activity. The sequence is that of ATP phosphoribosyltransferase (hisG) from Rhizobium meliloti (strain 1021) (Ensifer meliloti).